A 401-amino-acid polypeptide reads, in one-letter code: LysM domain-containing GPI-anchored protein LYP4 (401 aa).

The N-terminal stretch at 1-23 is a signal peptide; it reads MPPPLLLLLLLAAAAAAVAPARS. 4 disulfide bridges follow: Cys30–Cys96, Cys36–Cys162, Cys94–Cys160, and Cys96–Cys162. LysM domains are found at residues 106-156 and 175-218; these read VRYV…TLFV and LTYV…IIVV. Disulfide bonds link Cys223/Cys255 and Cys250/Cys279. N-linked (GlcNAc...) asparagine glycosylation is present at Asn240. Asn281, Asn288, and Asn310 each carry an N-linked (GlcNAc...) asparagine glycan. Ser373 carries GPI-anchor amidated serine lipidation. The propeptide at 374–401 is removed in mature form; that stretch reads SGPPPAGRHVVGDVLGAFALCLVGNLLW.

Interacts with LYP6. Interacts with CEBIP. Interacts with CERK1. In terms of tissue distribution, expressed in roots and leaves.

Its subcellular location is the cell membrane. In terms of biological role, functions in innate immunity. Functions as a pattern recognition receptor (PRR), sensing bacterial peptidoglycan (PGN) and fungal chitin at the cell surface. Involved in resistance against the bacterial pathogen Xanthomonas oryzae pv. oryzae (Xoo) and the fungal pathogen Magnaporthe oryzae. Binds PGN and fungal chitin in vitro. Involved in microbe-associated molecular patterns (MAMPs) perception and participates in the activation of defense genes against the bacterial pathogen Xanthomonas oryzae pv. oryzicola (Xoc) or the fungal pathogen Magnaporthe oryzae. The protein is LysM domain-containing GPI-anchored protein LYP4 of Oryza sativa subsp. japonica (Rice).